The sequence spans 226 residues: V-type proton ATPase subunit E (226 aa).

This sequence belongs to the V-ATPase E subunit family. In terms of assembly, V-ATPase is a heteromultimeric enzyme made up of two complexes: the ATP-hydrolytic V1 complex and the proton translocation V0 complex. The V1 complex consists of three catalytic AB heterodimers that form a heterohexamer, three peripheral stalks each consisting of EG heterodimers, one central rotor including subunits D and F, and the regulatory subunits C and H. The proton translocation complex V0 consists of the proton transport subunit a, a ring of proteolipid subunits c9c'', rotary subunit d, subunits e and f, and the accessory subunits VhaAC45 and ATP6AP2.

Subunit of the V1 complex of vacuolar(H+)-ATPase (V-ATPase), a multisubunit enzyme composed of a peripheral complex (V1) that hydrolyzes ATP and a membrane integral complex (V0) that translocates protons. V-ATPase is responsible for acidifying and maintaining the pH of intracellular compartments and in some cell types, is targeted to the plasma membrane, where it is responsible for acidifying the extracellular environment. The chain is V-type proton ATPase subunit E (VHA26) from Manduca sexta (Tobacco hawkmoth).